Reading from the N-terminus, the 441-residue chain is MAGUK p55 subfamily member 4 (441 aa).

The PDZ domain occupies M1–S84. Residues Q91–Q161 form the SH3 domain. The region spanning H232–Q421 is the Guanylate kinase-like domain. A coiled-coil region spans residues V373 to V430.

It belongs to the MAGUK family. Interacts with MPDZ. May interact with GRIA2. Forms a complex with CRB1 and PALS1. Interacts with FASLG. In terms of tissue distribution, highly expressed in brain and detected in lung, and bone (at protein level). Also expressed in intestine and spleen.

Its subcellular location is the cytoplasm. Functionally, may play a role in retinal photoreceptors development. This chain is MAGUK p55 subfamily member 4 (Mpp4), found in Rattus norvegicus (Rat).